The chain runs to 310 residues: Methionyl-tRNA formyltransferase (310 aa).

Residue 109 to 112 participates in (6S)-5,6,7,8-tetrahydrofolate binding; sequence SLLP.

It belongs to the Fmt family.

It catalyses the reaction L-methionyl-tRNA(fMet) + (6R)-10-formyltetrahydrofolate = N-formyl-L-methionyl-tRNA(fMet) + (6S)-5,6,7,8-tetrahydrofolate + H(+). Functionally, attaches a formyl group to the free amino group of methionyl-tRNA(fMet). The formyl group appears to play a dual role in the initiator identity of N-formylmethionyl-tRNA by promoting its recognition by IF2 and preventing the misappropriation of this tRNA by the elongation apparatus. The sequence is that of Methionyl-tRNA formyltransferase from Macrococcus caseolyticus (strain JCSC5402) (Macrococcoides caseolyticum).